A 245-amino-acid polypeptide reads, in one-letter code: Orotidine 5'-phosphate decarboxylase (245 aa).

Substrate-binding positions include aspartate 22, lysine 44, 71–80 (DLKFHDIPNT), threonine 131, arginine 192, glutamine 201, glycine 221, and arginine 222. The active-site Proton donor is lysine 73.

This sequence belongs to the OMP decarboxylase family. Type 1 subfamily. As to quaternary structure, homodimer.

It carries out the reaction orotidine 5'-phosphate + H(+) = UMP + CO2. It functions in the pathway pyrimidine metabolism; UMP biosynthesis via de novo pathway; UMP from orotate: step 2/2. In terms of biological role, catalyzes the decarboxylation of orotidine 5'-monophosphate (OMP) to uridine 5'-monophosphate (UMP). This is Orotidine 5'-phosphate decarboxylase from Escherichia coli O6:K15:H31 (strain 536 / UPEC).